Consider the following 503-residue polypeptide: MDLIPSFSLETWVLLALSLVLLYQYATYSHGFFKKLGIPGPKPLPLFGNVLSYRKGMWSFDIECRKKYGNMWGLYDGPQPVLAITEPDMIKAVLVKECYSVFTNRRSLVPVGFMKKSVSLSEDEEWKRIRTQLSPNFTSGKLKEMFPIIKQYGDVLVKNLRQEAEKGKPVQLKEIFGAYGMDIIIATAFGVNVDSLNNPHDPFVSKANKLFRFDFLSPFLLSTVMFPFLTQLYEMLSISIFPRDSLKFFTKFVKKTKENHLESNKKQRVNFLQMMLNSQNFKDTESHKALSDVEILAQSIIFIFAGYETSSSTLSCIMYSLATHPDVQKKLHQEIDKTLPNKAFPTYDVMMEMEYLDMVVNETLRLYPVANRIERMSKKDFEINGMSFPKGTLVMIPSFALHRDSKYWPEPDEFRPERFSKKNKENIDPYIYMPFGNGPRNCIGRRMALMNLKLALIRLLQNFSFYPCKETQIPLRLSSEALLQPEKPLILKVVSRDETIRGA.

Cys442 is a binding site for heme.

This sequence belongs to the cytochrome P450 family. The cofactor is heme.

It is found in the endoplasmic reticulum membrane. It localises to the microsome membrane. It carries out the reaction an organic molecule + reduced [NADPH--hemoprotein reductase] + O2 = an alcohol + oxidized [NADPH--hemoprotein reductase] + H2O + H(+). In terms of biological role, cytochromes P450 are a group of heme-thiolate monooxygenases. In liver microsomes, this enzyme is involved in an NADPH-dependent electron transport pathway. It oxidizes a variety of structurally unrelated compounds, including steroids, fatty acids, and xenobiotics. In Cavia porcellus (Guinea pig), this protein is Cytochrome P450 3A15 (CYP3A15).